We begin with the raw amino-acid sequence, 120 residues long: Cytochrome b5 (120 aa).

The region spanning 2 to 78 (PKVYSYQEVA…LKGLYIGDVD (77 aa)) is the Cytochrome b5 heme-binding domain. Heme is bound by residues His-37 and His-61. A helical membrane pass occupies residues 98–118 (GSGTLVVILAILMLGVAYYLL).

Belongs to the cytochrome b5 family.

The protein resides in the endoplasmic reticulum membrane. Its subcellular location is the microsome membrane. Its function is as follows. Membrane bound hemoprotein which function as an electron carrier for several membrane bound oxygenases. It plays a role in fatty-acid desaturation and is also involved in several steps of the sterol biosynthesis pathway, particularly in the 4-demethylation of the 4,4'-dimethyl zymosterol. This Saccharomyces cerevisiae (strain ATCC 204508 / S288c) (Baker's yeast) protein is Cytochrome b5 (CYB5).